Consider the following 407-residue polypeptide: Peptidase T (407 aa).

A Zn(2+)-binding site is contributed by H81. D83 is an active-site residue. Zn(2+) is bound at residue D142. E176 serves as the catalytic Proton acceptor. Zn(2+) is bound by residues E177, D199, and H381.

This sequence belongs to the peptidase M20B family. Zn(2+) serves as cofactor.

The protein resides in the cytoplasm. The enzyme catalyses Release of the N-terminal residue from a tripeptide.. Cleaves the N-terminal amino acid of tripeptides. The polypeptide is Peptidase T (Streptococcus pneumoniae (strain Hungary19A-6)).